The sequence spans 137 residues: Large ribosomal subunit protein uL16 (137 aa).

Belongs to the universal ribosomal protein uL16 family. As to quaternary structure, part of the 50S ribosomal subunit.

Its function is as follows. Binds 23S rRNA and is also seen to make contacts with the A and possibly P site tRNAs. This Streptococcus thermophilus (strain CNRZ 1066) protein is Large ribosomal subunit protein uL16.